A 655-amino-acid polypeptide reads, in one-letter code: p-hydroxybenzoic acid efflux pump subunit AaeB (655 aa).

11 consecutive transmembrane segments (helical) span residues 13-33 (FAVK…HFQL), 38-58 (WAVL…GGEP), 69-89 (LRII…IAMI), 93-113 (LLMI…SSLV), 121-141 (WGLA…EPLL), 152-172 (EIVI…PRSI), 370-390 (LFWL…IAVV), 407-427 (FIYG…VIIP), 431-451 (QSML…GIEV), 455-475 (LLGS…DNPM), and 482-502 (FLDS…VILL).

The protein belongs to the aromatic acid exporter ArAE (TC 2.A.85) family.

The protein resides in the cell inner membrane. Its function is as follows. Forms an efflux pump with AaeA. Could function as a metabolic relief valve, allowing to eliminate certain compounds when they accumulate to high levels in the cell. This Shigella boydii serotype 4 (strain Sb227) protein is p-hydroxybenzoic acid efflux pump subunit AaeB.